A 497-amino-acid chain; its full sequence is Galactose/methyl galactoside import ATP-binding protein MglA (497 aa).

ABC transporter domains lie at 6 to 241 and 252 to 497; these read LEIK…VGRS and VPGE…AKYL. An ATP-binding site is contributed by 38–45; that stretch reads GENGAGKS.

The protein belongs to the ABC transporter superfamily. Galactose/methyl galactoside importer (TC 3.A.1.2.3) family. As to quaternary structure, the complex is composed of one ATP-binding protein (MglA), two transmembrane proteins (MglC) and a solute-binding protein (MglB).

Its subcellular location is the cell inner membrane. The catalysed reaction is D-galactose(out) + ATP + H2O = D-galactose(in) + ADP + phosphate + H(+). It carries out the reaction methyl beta-D-galactoside(out) + ATP + H2O = methyl beta-D-galactoside(in) + ADP + phosphate + H(+). In terms of biological role, part of the ABC transporter complex MglABC involved in galactose/methyl galactoside import. Responsible for energy coupling to the transport system. In Treponema denticola (strain ATCC 35405 / DSM 14222 / CIP 103919 / JCM 8153 / KCTC 15104), this protein is Galactose/methyl galactoside import ATP-binding protein MglA.